Here is a 499-residue protein sequence, read N- to C-terminus: MAAASVSAASDSQFSSVLAEPSRSNGNMVHHSSSPYVLYPPDKPFLNSDLRRSPNKPTFAYPESNSRAIFSALKNLQDKIRRLELERIRAEESVKTLSRETIEYKKVLDEQIQERENSKNEESKHNQELASQLVAAENKCNLLEKQLEYMRNMIKHAEMERTSVLEKQVSLERERQHDQSHVQSQLEKLDLLEQEYNRLTAMQALAEKKMQELESKLHEEEQERKRMQARAAELQSGIEANRLIFEDRNTSCVSTSTRKIKKKKSKPPEKKGFRNNFGAQPHYRLCLGDMPFVAGTSTSPSHAVVANVQHVLHLMKHHSRALCNDRVVNSVPLAKQACSRGSKSKKSVAPPSSSVNEELSDVLQTLQDEFGQMSFDHQQLTKLIQESPSEELKDNLECELEALVRRMEAKANQITKVRKYQAQLEKQSTDKQKELKGNKKTLDEEGNSSSRSSVITRTTSKKDFTKQRPGEKSRKNLQLLKDMQTLQNSLQSSNVCWDY.

The segment covering 1-16 has biased composition (low complexity); that stretch reads MAAASVSAASDSQFSS. The tract at residues 1–41 is disordered; it reads MAAASVSAASDSQFSSVLAEPSRSNGNMVHHSSSPYVLYPP. Over residues 22–35 the composition is skewed to polar residues; that stretch reads SRSNGNMVHHSSSP. S53 bears the Phosphoserine mark. The centrosome localization domain (CLD) stretch occupies residues 58 to 239; that stretch reads TFAYPESNSR…RAAELQSGIE (182 aa). The stretch at 63–242 forms a coiled coil; sequence ESNSRAIFSA…ELQSGIEANR (180 aa). Disordered regions lie at residues 255–275 and 424–476; these read TSTRKIKKKKSKPPEKKGFRN and LEKQ…SRKN. A mediates interaction with microtubules region spans residues 278-490; it reads GAQPHYRLCL…KDMQTLQNSL (213 aa). The stretch at 388-491 forms a coiled coil; that stretch reads PSEELKDNLE…DMQTLQNSLQ (104 aa). The segment covering 427 to 443 has biased composition (basic and acidic residues); that stretch reads QSTDKQKELKGNKKTLD. Residues 448–458 show a composition bias toward low complexity; it reads SSSRSSVITRT. Residues 460–474 show a composition bias toward basic and acidic residues; it reads SKKDFTKQRPGEKSR.

The protein belongs to the translokin family. Homodimer and homooligomer. Interacts with FGF2 and RAP80. Does not interact with FGF1 or FGF2 isoform 24 kDa. Interacts with microtubules. As to expression, ubiquitous (at protein level).

It localises to the nucleus. It is found in the cytoplasm. The protein resides in the cytoskeleton. Its subcellular location is the microtubule organizing center. The protein localises to the centrosome. Centrosomal protein which may be required for microtubule attachment to centrosomes. May act by forming ring-like structures around microtubules. Mediates nuclear translocation and mitogenic activity of the internalized growth factor FGF2. This is Centrosomal protein of 57 kDa (Cep57) from Rattus norvegicus (Rat).